Here is a 308-residue protein sequence, read N- to C-terminus: MATTATTTPSATSLTTLHRRIPLFPTTTTLLSLSSSSKPLFLSLSSTRSFPTHLYCIKKDDIDITFFEQDNPDEEITFDPPEKPEGYIPPRAVDEPPFESEEEIALAYEELYGAAYSGESLLGNDVYAMDSKIKKATGFGSKSKKEKIRDGFEENVVQVRRVTKVVKGGKHMRFRAIVVVGDKKGQVGVGVGKAKEVVSAVQKAAVDARRNIITVPMTKYLTFPHRNEADYGAARVMLRPAAPGTGVIAGGAVRTVLEMAGVENALGKQLGSNNALNNARATIVAVQTMRQFSDVARDRGIPMEELWK.

The N-terminal 55 residues, 1–55 (MATTATTTPSATSLTTLHRRIPLFPTTTTLLSLSSSSKPLFLSLSSTRSFPTHLY), are a transit peptide targeting the chloroplast. The 64-residue stretch at 152–215 (FEENVVQVRR…VDARRNIITV (64 aa)) folds into the S5 DRBM domain.

Component of the chloroplast small ribosomal subunit (SSU). Mature 70S chloroplast ribosomes of higher plants consist of a small (30S) and a large (50S) subunit. The 30S small subunit contains 1 molecule of ribosomal RNA (16S rRNA) and 24 different proteins. The 50S large subunit contains 3 rRNA molecules (23S, 5S and 4.5S rRNA) and 33 different proteins. uS5c binds directly to 16S ribosomal RNA.

It is found in the plastid. The protein localises to the chloroplast. Component of the chloroplast ribosome (chloro-ribosome), a dedicated translation machinery responsible for the synthesis of chloroplast genome-encoded proteins, including proteins of the transcription and translation machinery and components of the photosynthetic apparatus. This Spinacia oleracea (Spinach) protein is Small ribosomal subunit protein uS5c (rps5).